The chain runs to 45 residues: Peroxidase 3 (45 aa).

The protein belongs to the peroxidase family. Classical plant (class III) peroxidase subfamily. Heme b is required as a cofactor. Requires Ca(2+) as cofactor.

It is found in the secreted. It catalyses the reaction 2 a phenolic donor + H2O2 = 2 a phenolic radical donor + 2 H2O. In terms of biological role, removal of H(2)O(2), oxidation of toxic reductants, biosynthesis and degradation of lignin, suberization, auxin catabolism, response to environmental stresses such as wounding, pathogen attack and oxidative stress. These functions might be dependent on each isozyme/isoform in each plant tissue. The protein is Peroxidase 3 of Capsicum annuum (Capsicum pepper).